The chain runs to 212 residues: Fibrillarin-like rRNA/tRNA 2'-O-methyltransferase (212 aa).

A disordered region spans residues 1-37 (MSEPNLPAGVERREIGGETRLATRGPPVYGEPTADGW). Residues 74–75 (TT), 90–91 (EF), 115–116 (DA), and 136–139 (DVAT) each bind S-adenosyl-L-methionine.

Belongs to the methyltransferase superfamily. Fibrillarin family. In terms of assembly, interacts with nop5. Component of box C/D small ribonucleoprotein (sRNP) particles that contain rpl7ae, FlpA and nop5, plus a guide RNA.

Involved in pre-rRNA and tRNA processing. Utilizes the methyl donor S-adenosyl-L-methionine to catalyze the site-specific 2'-hydroxyl methylation of ribose moieties in rRNA and tRNA. Site specificity is provided by a guide RNA that base pairs with the substrate. Methylation occurs at a characteristic distance from the sequence involved in base pairing with the guide RNA. The protein is Fibrillarin-like rRNA/tRNA 2'-O-methyltransferase of Halorubrum lacusprofundi (strain ATCC 49239 / DSM 5036 / JCM 8891 / ACAM 34).